A 343-amino-acid chain; its full sequence is NADH-ubiquinone oxidoreductase chain 1 (343 aa).

Helical transmembrane passes span 4-24 (LISI…VAFL), 70-90 (ANII…LLGY), 106-126 (LGIL…LLAG), 154-174 (FYIL…IIES), 177-197 (VVYF…GCIA), 224-244 (VIFM…ICIL), 278-298 (GLSS…FIWV), and 316-336 (TILL…VIGL).

The protein belongs to the complex I subunit 1 family.

It is found in the mitochondrion inner membrane. It carries out the reaction a ubiquinone + NADH + 5 H(+)(in) = a ubiquinol + NAD(+) + 4 H(+)(out). Core subunit of the mitochondrial membrane respiratory chain NADH dehydrogenase (Complex I) that is believed to belong to the minimal assembly required for catalysis. Complex I functions in the transfer of electrons from NADH to the respiratory chain. The immediate electron acceptor for the enzyme is believed to be ubiquinone. The protein is NADH-ubiquinone oxidoreductase chain 1 (ND1) of Trichophyton rubrum (Athlete's foot fungus).